Here is a 123-residue protein sequence, read N- to C-terminus: Small ribosomal subunit protein uS12 (123 aa).

Position 89 is a 3-methylthioaspartic acid (D89).

This sequence belongs to the universal ribosomal protein uS12 family. As to quaternary structure, part of the 30S ribosomal subunit. Contacts proteins S8 and S17. May interact with IF1 in the 30S initiation complex.

Functionally, with S4 and S5 plays an important role in translational accuracy. Its function is as follows. Interacts with and stabilizes bases of the 16S rRNA that are involved in tRNA selection in the A site and with the mRNA backbone. Located at the interface of the 30S and 50S subunits, it traverses the body of the 30S subunit contacting proteins on the other side and probably holding the rRNA structure together. The combined cluster of proteins S8, S12 and S17 appears to hold together the shoulder and platform of the 30S subunit. This Bradyrhizobium diazoefficiens (strain JCM 10833 / BCRC 13528 / IAM 13628 / NBRC 14792 / USDA 110) protein is Small ribosomal subunit protein uS12.